We begin with the raw amino-acid sequence, 187 residues long: GTP cyclohydrolase 1 1 (187 aa).

Belongs to the GTP cyclohydrolase I family. In terms of assembly, homomer.

It catalyses the reaction GTP + H2O = 7,8-dihydroneopterin 3'-triphosphate + formate + H(+). It participates in cofactor biosynthesis; 7,8-dihydroneopterin triphosphate biosynthesis; 7,8-dihydroneopterin triphosphate from GTP: step 1/1. The sequence is that of GTP cyclohydrolase 1 1 from Pseudomonas syringae pv. tomato (strain ATCC BAA-871 / DC3000).